The following is a 75-amino-acid chain: Probable [Fe-S]-dependent transcriptional repressor (75 aa).

Residues Cys-55, Cys-60, Cys-63, and Cys-72 each coordinate iron-sulfur cluster.

This sequence belongs to the FeoC family.

In terms of biological role, may function as a transcriptional regulator that controls feoABC expression. In Serratia marcescens, this protein is Probable [Fe-S]-dependent transcriptional repressor.